The primary structure comprises 98 residues: NADH-ubiquinone oxidoreductase chain 4L (98 aa).

3 consecutive transmembrane segments (helical) span residues 1–21 (MSLT…GLLM), 29–49 (ALLC…ITIL), and 61–81 (IILL…LVMV).

The protein belongs to the complex I subunit 4L family. In terms of assembly, core subunit of respiratory chain NADH dehydrogenase (Complex I) which is composed of 45 different subunits.

It is found in the mitochondrion inner membrane. It catalyses the reaction a ubiquinone + NADH + 5 H(+)(in) = a ubiquinol + NAD(+) + 4 H(+)(out). Its function is as follows. Core subunit of the mitochondrial membrane respiratory chain NADH dehydrogenase (Complex I) which catalyzes electron transfer from NADH through the respiratory chain, using ubiquinone as an electron acceptor. Part of the enzyme membrane arm which is embedded in the lipid bilayer and involved in proton translocation. This Rhinophylla pumilio (Dwarf little fruit bat) protein is NADH-ubiquinone oxidoreductase chain 4L (MT-ND4L).